The sequence spans 502 residues: Hexokinase-4 (502 aa).

A helical transmembrane segment spans residues 4 to 24; that stretch reads VLVMLTAAAAVVACSVATVMV. The 457-residue stretch at 35 to 491 folds into the Hexokinase domain; the sequence is RRVVGLLKDL…SSIGSALLLA (457 aa). A hexokinase small subdomain region spans residues 90-228; sequence NGSETGTYYA…GLDIRVAALV (139 aa). ADP is bound by residues G104 and S105. T194, K195, N229, and D230 together coordinate D-glucose. A hexokinase large subdomain region spans residues 229 to 480; it reads NDTVGALSFG…QHVVVKAMED (252 aa). T253 is an ADP binding site. 3 residues coordinate D-glucose: N256, E284, and E315. Position 445 (G445) interacts with ADP.

It belongs to the hexokinase family.

Its subcellular location is the mitochondrion outer membrane. It carries out the reaction a D-hexose + ATP = a D-hexose 6-phosphate + ADP + H(+). It catalyses the reaction D-fructose + ATP = D-fructose 6-phosphate + ADP + H(+). The catalysed reaction is D-glucose + ATP = D-glucose 6-phosphate + ADP + H(+). It participates in carbohydrate metabolism; hexose metabolism. The protein operates within carbohydrate degradation; glycolysis; D-glyceraldehyde 3-phosphate and glycerone phosphate from D-glucose: step 1/4. Functionally, fructose and glucose phosphorylating enzyme. May be involved in the phosphorylation of glucose during the export from mitochondrion to cytosol. In Arabidopsis thaliana (Mouse-ear cress), this protein is Hexokinase-4.